A 266-amino-acid polypeptide reads, in one-letter code: 2-hydroxyisocaproyl-CoA dehydratase activator (266 aa).

Residues 10-14 (STASK) and 102-104 (GQD) each bind ATP. Residue Cys125 participates in [4Fe-4S] cluster binding. Asp134 lines the ATP pocket. Cys164 contributes to the [4Fe-4S] cluster binding site. Gly215 and Gln241 together coordinate ATP.

The protein belongs to the HadI activator family. Homodimer. It depends on [4Fe-4S] cluster as a cofactor.

In terms of biological role, involved in the reductive branch of L-leucine fermentation. Required for the activation of (R)-2-hydroxyisocaproyl-CoA dehydratase. The reduced activator transfers one electron to the dehydratase concomitant with hydrolysis of ATP. This protein is extremely sensitive towards oxygen. The chain is 2-hydroxyisocaproyl-CoA dehydratase activator from Clostridioides difficile (Peptoclostridium difficile).